A 529-amino-acid chain; its full sequence is Peptide chain release factor 3 (529 aa).

The 270-residue stretch at A11–M280 folds into the tr-type G domain. GTP contacts are provided by residues S20–T27, D88–H92, and N142–D145.

The protein belongs to the TRAFAC class translation factor GTPase superfamily. Classic translation factor GTPase family. PrfC subfamily.

It is found in the cytoplasm. In terms of biological role, increases the formation of ribosomal termination complexes and stimulates activities of RF-1 and RF-2. It binds guanine nucleotides and has strong preference for UGA stop codons. It may interact directly with the ribosome. The stimulation of RF-1 and RF-2 is significantly reduced by GTP and GDP, but not by GMP. This chain is Peptide chain release factor 3, found in Yersinia pestis bv. Antiqua (strain Antiqua).